Here is a 364-residue protein sequence, read N- to C-terminus: Peroxisome biogenesis protein 3-2 (364 aa).

The helical transmembrane segment at 15-32 (VLVTAGCLGSGYLLYKLY) threads the bilayer. The stretch at 33–62 (NSHTRRLADLERELAHERENDEIIKTQMKA) forms a coiled coil.

The protein belongs to the peroxin-3 family.

The protein resides in the peroxisome membrane. Functionally, involved in morphology determination of peroxisomes, but not in import of peroxisomal matrix proteins. May act as a docking factor for PEX19 and be necessary for the import of peroxisomal membrane proteins in the peroxisomes. The polypeptide is Peroxisome biogenesis protein 3-2 (PEX3-2) (Arabidopsis thaliana (Mouse-ear cress)).